Consider the following 740-residue polypeptide: NAD(P)H-quinone oxidoreductase subunit 5, chloroplastic (740 aa).

16 helical membrane-spanning segments follow: residues 9-29 (WIIPFIPLPVPMLIGAGLFLF), 40-60 (WAFQSVLLLSIVMVFSIYLSI), 89-109 (IDPLTSIMSILITTVGIMVLI), 125-145 (FAYMSFFSTSMLGLVTSSNLI), 147-167 (IYIFWELVGLCSYLLIGFWFT), 185-205 (GDFGLLLGILGFYWITGSFEF), 219-239 (NEVDFLFVTLCAVLLFAGAVA), 258-278 (TPISALIHAATMVAAGIFLVA), 286-306 (VIPYIMYLISVIGIITVLLGA), 327-347 (LGYMMLALGMGSYRSALFHLI), 354-374 (ALLFLGSGSIIHSMETIVGYS), 396-416 (ITFLLGTLSLCGIPPLACFWS), 425-445 (WLYSPIFAIIAWATAGLTAFY), 543-563 (LFPIFVLGLFTLFVGSIGIPF), 602-622 (VLSVSIAYFGIFIASFLYKPI), and 717-737 (SYLFLYLAYVSIFLLVYYLLF).

It belongs to the complex I subunit 5 family. As to quaternary structure, NDH is composed of at least 16 different subunits, 5 of which are encoded in the nucleus.

It localises to the plastid. It is found in the chloroplast thylakoid membrane. The enzyme catalyses a plastoquinone + NADH + (n+1) H(+)(in) = a plastoquinol + NAD(+) + n H(+)(out). The catalysed reaction is a plastoquinone + NADPH + (n+1) H(+)(in) = a plastoquinol + NADP(+) + n H(+)(out). In terms of biological role, NDH shuttles electrons from NAD(P)H:plastoquinone, via FMN and iron-sulfur (Fe-S) centers, to quinones in the photosynthetic chain and possibly in a chloroplast respiratory chain. The immediate electron acceptor for the enzyme in this species is believed to be plastoquinone. Couples the redox reaction to proton translocation, and thus conserves the redox energy in a proton gradient. The sequence is that of NAD(P)H-quinone oxidoreductase subunit 5, chloroplastic (ndhF) from Nicotiana tabacum (Common tobacco).